The following is a 350-amino-acid chain: Hydroxymethylglutaryl-CoA synthase (350 aa).

Catalysis depends on glutamate 83, which acts as the Proton donor/acceptor. Cysteine 115 (acyl-thioester intermediate) is an active-site residue. (3S)-3-hydroxy-3-methylglutaryl-CoA-binding residues include cysteine 115 and threonine 156. Residue arginine 204 coordinates CoA. The (3S)-3-hydroxy-3-methylglutaryl-CoA site is built by threonine 206 and histidine 239. Residue histidine 239 is the Proton donor/acceptor of the active site. CoA is bound at residue lysine 244. Asparagine 271 and serine 301 together coordinate (3S)-3-hydroxy-3-methylglutaryl-CoA.

Belongs to the thiolase-like superfamily. Archaeal HMG-CoA synthase family. As to quaternary structure, interacts with acetoacetyl-CoA thiolase that catalyzes the precedent step in the pathway and with a DUF35 protein. The acetoacetyl-CoA thiolase/HMG-CoA synthase complex channels the intermediate via a fused CoA-binding site, which allows for efficient coupling of the endergonic thiolase reaction with the exergonic HMGCS reaction.

It carries out the reaction acetoacetyl-CoA + acetyl-CoA + H2O = (3S)-3-hydroxy-3-methylglutaryl-CoA + CoA + H(+). Its pathway is metabolic intermediate biosynthesis; (R)-mevalonate biosynthesis; (R)-mevalonate from acetyl-CoA: step 2/3. Functionally, catalyzes the condensation of acetyl-CoA with acetoacetyl-CoA to form 3-hydroxy-3-methylglutaryl-CoA (HMG-CoA). Functions in the mevalonate (MVA) pathway leading to isopentenyl diphosphate (IPP), a key precursor for the biosynthesis of isoprenoid compounds that are building blocks of archaeal membrane lipids. The protein is Hydroxymethylglutaryl-CoA synthase of Thermococcus kodakarensis (strain ATCC BAA-918 / JCM 12380 / KOD1) (Pyrococcus kodakaraensis (strain KOD1)).